Consider the following 112-residue polypeptide: UPF0342 protein SPH_1504 (112 aa).

It belongs to the UPF0342 family.

The protein is UPF0342 protein SPH_1504 of Streptococcus pneumoniae (strain Hungary19A-6).